A 291-amino-acid chain; its full sequence is 4-hydroxy-tetrahydrodipicolinate synthase (291 aa).

Residue T44 participates in pyruvate binding. Y132 (proton donor/acceptor) is an active-site residue. The Schiff-base intermediate with substrate role is filled by K160. V202 serves as a coordination point for pyruvate.

This sequence belongs to the DapA family. In terms of assembly, homotetramer; dimer of dimers.

It is found in the cytoplasm. It carries out the reaction L-aspartate 4-semialdehyde + pyruvate = (2S,4S)-4-hydroxy-2,3,4,5-tetrahydrodipicolinate + H2O + H(+). It functions in the pathway amino-acid biosynthesis; L-lysine biosynthesis via DAP pathway; (S)-tetrahydrodipicolinate from L-aspartate: step 3/4. In terms of biological role, catalyzes the condensation of (S)-aspartate-beta-semialdehyde [(S)-ASA] and pyruvate to 4-hydroxy-tetrahydrodipicolinate (HTPA). This is 4-hydroxy-tetrahydrodipicolinate synthase from Clostridium perfringens (strain SM101 / Type A).